Reading from the N-terminus, the 349-residue chain is MKFLDQAKVYIRAGDGGAGAVSFRREKFIEFGGPDGGDGGRGGDVWIEAVEGLNTLIDYRYQQHFKAKPGIHGMGRNRTGAKGDDVVLKVPVGTQVYEEDNETLICDLTEVGQRFLLLKGGNGGFGNQHFKSSTNQAPRRANPGLPGEELWIWLRLKLIADAGLIGLPNAGKSTFLATVTAAKPKIADYPFTTLHPNLGVVRIDAREFVLADIPGLIEGAHMGVGIGDRFLGHVERTGVLLHLISAREEDVAATYKTVRRELKAYGHGLSEKPEVVALSQIDLLDEEERREKLAALKKAARRAALPLSSATGEGVQDVLRALMRVVQAAREEERAAETANERWQKQADS.

An Obg domain is found at 1–159; that stretch reads MKFLDQAKVY…LWIWLRLKLI (159 aa). The OBG-type G domain occupies 160 to 327; the sequence is ADAGLIGLPN…VLRALMRVVQ (168 aa). GTP is bound by residues 166–173, 191–195, 212–215, 279–282, and 308–310; these read GLPNAGKS, FTTLH, DIPG, SQID, and SSA. Mg(2+)-binding residues include S173 and T193.

The protein belongs to the TRAFAC class OBG-HflX-like GTPase superfamily. OBG GTPase family. In terms of assembly, monomer. It depends on Mg(2+) as a cofactor.

It localises to the cytoplasm. In terms of biological role, an essential GTPase which binds GTP, GDP and possibly (p)ppGpp with moderate affinity, with high nucleotide exchange rates and a fairly low GTP hydrolysis rate. Plays a role in control of the cell cycle, stress response, ribosome biogenesis and in those bacteria that undergo differentiation, in morphogenesis control. This chain is GTPase Obg, found in Chelativorans sp. (strain BNC1).